The sequence spans 251 residues: Methionine aminopeptidase (251 aa).

His76 is a substrate binding site. Residues Asp93, Asp104, and His168 each coordinate a divalent metal cation. His175 serves as a coordination point for substrate. Residues Glu202 and Glu233 each coordinate a divalent metal cation.

Belongs to the peptidase M24A family. Methionine aminopeptidase type 1 subfamily. Monomer. Co(2+) serves as cofactor. Requires Zn(2+) as cofactor. It depends on Mn(2+) as a cofactor. The cofactor is Fe(2+).

The catalysed reaction is Release of N-terminal amino acids, preferentially methionine, from peptides and arylamides.. Removes the N-terminal methionine from nascent proteins. The N-terminal methionine is often cleaved when the second residue in the primary sequence is small and uncharged (Met-Ala-, Cys, Gly, Pro, Ser, Thr, or Val). Requires deformylation of the N(alpha)-formylated initiator methionine before it can be hydrolyzed. In Staphylococcus epidermidis (strain ATCC 35984 / DSM 28319 / BCRC 17069 / CCUG 31568 / BM 3577 / RP62A), this protein is Methionine aminopeptidase.